Reading from the N-terminus, the 481-residue chain is NADH-quinone oxidoreductase subunit N (481 aa).

Helical transmembrane passes span 11 to 31 (AYPEIFLLLMVCVVMLADLFA), 37 to 57 (YLAFYLSLLTLAGCALVTCGI), 74 to 94 (AMSDILKLLIYVTVAAVLIYS), 103 to 123 (LLKGEFFSLALFATLGMMVMV), 128 to 148 (LITLYLGLELLSLSLYAMVAL), 162 to 182 (FFVLGALASGFLLYGMSMLYG), 205 to 225 (IFIIGLVFVVAGIGFKLSAVP), 238 to 258 (PTAVTLFIGSAPKFAAFGFVM), 272 to 292 (WQGMLVLLAVASMAVGNIAAI), 300 to 320 (MLAYSTISHMGFVLLGFIAAG), 328 to 348 (MFYVIAYVLMTLGAFGIIMLV), 371 to 391 (LAFMMLLVMFSMAGIPPMIGF), 405 to 425 (GYIWLVVVAVMLSLIGAFYYL), and 457 to 477 (LAIILLGMFPQMLMGLSLSAI).

The protein belongs to the complex I subunit 2 family. As to quaternary structure, NDH-1 is composed of 14 different subunits. Subunits NuoA, H, J, K, L, M, N constitute the membrane sector of the complex.

The protein resides in the cell inner membrane. It carries out the reaction a quinone + NADH + 5 H(+)(in) = a quinol + NAD(+) + 4 H(+)(out). Functionally, NDH-1 shuttles electrons from NADH, via FMN and iron-sulfur (Fe-S) centers, to quinones in the respiratory chain. The immediate electron acceptor for the enzyme in this species is believed to be ubiquinone. Couples the redox reaction to proton translocation (for every two electrons transferred, four hydrogen ions are translocated across the cytoplasmic membrane), and thus conserves the redox energy in a proton gradient. The chain is NADH-quinone oxidoreductase subunit N from Nitrosomonas europaea (strain ATCC 19718 / CIP 103999 / KCTC 2705 / NBRC 14298).